The primary structure comprises 205 residues: Large ribosomal subunit protein bL9 (205 aa).

The tract at residues 160-205 is disordered; sequence RDRKSRNAAAASEVQDAPVEDGGDEVVSVDSVAAEDGGADASGGTA. Residues 184–195 are compositionally biased toward low complexity; the sequence is EVVSVDSVAAED.

The protein belongs to the bacterial ribosomal protein bL9 family.

Its function is as follows. Binds to the 23S rRNA. This chain is Large ribosomal subunit protein bL9, found in Anaplasma phagocytophilum (strain HZ).